We begin with the raw amino-acid sequence, 196 residues long: uncharacterized protein (196 aa).

The chain crosses the membrane as a helical span at residues 22–42 (MIIIPMALLVFILIIGSFFAI).

It is found in the cell membrane. This is an uncharacterized protein from Lactobacillus acidophilus (strain ATCC 700396 / NCK56 / N2 / NCFM).